The primary structure comprises 66 residues: Large ribosomal subunit protein uL29 (66 aa).

It belongs to the universal ribosomal protein uL29 family.

The sequence is that of Large ribosomal subunit protein uL29 from Deinococcus deserti (strain DSM 17065 / CIP 109153 / LMG 22923 / VCD115).